A 315-amino-acid polypeptide reads, in one-letter code: Probable serine acetyltransferase 4 (315 aa).

Positions 287–315 (AKPIIGKKAAPQRRPEELPGVTMEQRWSD) are disordered.

Belongs to the transferase hexapeptide repeat family. As to quaternary structure, homomultimer.

The enzyme catalyses L-serine + acetyl-CoA = O-acetyl-L-serine + CoA. Its pathway is amino-acid biosynthesis; L-cysteine biosynthesis; L-cysteine from L-serine: step 1/2. This Oryza sativa subsp. japonica (Rice) protein is Probable serine acetyltransferase 4 (SAT4).